The following is a 446-amino-acid chain: CBL-interacting protein kinase 8 (446 aa).

A Protein kinase domain is found at 13–266 (YEVGRTIGEG…IEEIRNDEWF (254 aa)). ATP is bound by residues 19 to 27 (IGEGTFAKV) and Lys-42. Catalysis depends on Asp-136, which acts as the Proton acceptor. Positions 154-181 (DFGLSAWPAQGGALLRTTCGTPNYVAPE) are activation loop. The 29-residue stretch at 301–329 (LDDEAGPLTLNAFDLIILSQGLNLAALFD) folds into the NAF domain. The tract at residues 336-365 (KLQNRFLSRKPAKVIMSSMEVVAQSMGYKT) is PPI.

It belongs to the protein kinase superfamily. CAMK Ser/Thr protein kinase family. SNF1 subfamily. The cofactor is Mn(2+).

The catalysed reaction is L-seryl-[protein] + ATP = O-phospho-L-seryl-[protein] + ADP + H(+). It carries out the reaction L-threonyl-[protein] + ATP = O-phospho-L-threonyl-[protein] + ADP + H(+). In terms of biological role, CIPK serine-threonine protein kinases interact with CBL proteins. Binding of a CBL protein to the regulatory NAF domain of CIPK protein lead to the activation of the kinase in a calcium-dependent manner. In Oryza sativa subsp. japonica (Rice), this protein is CBL-interacting protein kinase 8 (CIPK8).